Here is a 430-residue protein sequence, read N- to C-terminus: Adenylosuccinate synthetase (430 aa).

GTP contacts are provided by residues 12 to 18 (GDEGKGK) and 40 to 42 (GHT). Aspartate 13 (proton acceptor) is an active-site residue. Mg(2+)-binding residues include aspartate 13 and glycine 40. IMP contacts are provided by residues 13 to 16 (DEGK), 38 to 41 (NAGH), threonine 130, arginine 144, glutamine 224, threonine 239, and arginine 303. Catalysis depends on histidine 41, which acts as the Proton donor. 299–305 (TVTSRKR) lines the substrate pocket. Residues arginine 305, 331–333 (KLD), and 413–415 (STS) contribute to the GTP site.

The protein belongs to the adenylosuccinate synthetase family. As to quaternary structure, homodimer. Mg(2+) is required as a cofactor.

It is found in the cytoplasm. It catalyses the reaction IMP + L-aspartate + GTP = N(6)-(1,2-dicarboxyethyl)-AMP + GDP + phosphate + 2 H(+). The protein operates within purine metabolism; AMP biosynthesis via de novo pathway; AMP from IMP: step 1/2. In terms of biological role, plays an important role in the de novo pathway of purine nucleotide biosynthesis. Catalyzes the first committed step in the biosynthesis of AMP from IMP. This is Adenylosuccinate synthetase from Pelagibacter ubique (strain HTCC1062).